Here is a 450-residue protein sequence, read N- to C-terminus: tRNA modification GTPase MnmE (450 aa).

Residues Arg23, Glu79, and Lys118 each coordinate (6S)-5-formyl-5,6,7,8-tetrahydrofolate. Positions 214 to 374 (GITLILVGKP…LKDHILAKVG (161 aa)) constitute a TrmE-type G domain. Asn224 is a binding site for K(+). Residues 224-229 (NAGKSS), 243-249 (TSIAGTT), and 268-271 (DTAG) contribute to the GTP site. Ser228 contacts Mg(2+). K(+) contacts are provided by Thr243, Ile245, and Thr248. Thr249 lines the Mg(2+) pocket. Lys450 lines the (6S)-5-formyl-5,6,7,8-tetrahydrofolate pocket.

The protein belongs to the TRAFAC class TrmE-Era-EngA-EngB-Septin-like GTPase superfamily. TrmE GTPase family. As to quaternary structure, homodimer. Heterotetramer of two MnmE and two MnmG subunits. It depends on K(+) as a cofactor.

It localises to the cytoplasm. Exhibits a very high intrinsic GTPase hydrolysis rate. Involved in the addition of a carboxymethylaminomethyl (cmnm) group at the wobble position (U34) of certain tRNAs, forming tRNA-cmnm(5)s(2)U34. In Francisella philomiragia subsp. philomiragia (strain ATCC 25017 / CCUG 19701 / FSC 153 / O#319-036), this protein is tRNA modification GTPase MnmE.